The following is a 733-amino-acid chain: MTSHDVRDVLNLPSDHAGPRPSKKARTATPRPNLKGLAREVQNLGGDNPIAIVPEVSIFKKRRTVSRKPAAKWELKAFTNSARGDDGALVLRHWKRKPDGTVQDGSAEGQDSAATADNSADKPEDSSFAKFNVRVSVPQYSEDQYNTNLKHPDWTKEETDYLLELAKDFDLRWPIIWDRYEYAPQQPEGETPDGMAVVPASKPRTMEDLKARYYEVAAKMMAVQKPAQYMTRPEFELYEMMLHFDPKQEQNRKRFAENTLKRSSDEAREEEALLLEIKRIMARTERFNEERRELYNRLDYPASESDINSFKTSAGLQSLLQTLLNVDKSKKRKSIMAPENGVPPAAAAAAATAALPPAAAAVAAAPEVPPAASRRESLAASSTAGANDHHEPPVREPPVRHERQESRSHHRNESRSERADRHGAHGHHHRDSVSQTPATPAEAPTPVPAPAPAANKKKGPQQPERRKLSEHEEQVYGVSHHDRLGSGPTFRYEKINKLYSHKSGQQQMRITNLLLELDIPARLIMPTAAVTAQFEVLWGAVTTLVDLRKMSDKVDAEIKLEEAKKAERERAAREAAEARGETVEKKGGEEEGEGGGADDKQKDGGGAGGDDAKDKSGESAQADEQKNDQKAEDAKAQKEQQGEGQDQQKKGEEGLVVPIKEGGGEKGQGDAAAAATAAEKEAESSSNQPKIKEEADENGSSSGAGASSGARQHKRSASVLSNASDKSTKKQKK.

Disordered regions lie at residues Met-1–Leu-34 and Pro-98–Phe-128. The SANT domain maps to Asn-146–Ala-217. Residues Lys-247–Asp-299 adopt a coiled-coil conformation. The segment covering Ala-371–Ala-384 has biased composition (low complexity). Disordered stretches follow at residues Ala-371 to Pro-488 and Lys-564 to Lys-733. Basic and acidic residues-rich tracts occupy residues Asn-387–Gly-423, Pro-463–Leu-484, Lys-564–Glu-589, and Asp-610–Glu-653. The span at Gly-699–Ala-710 shows a compositional bias: low complexity.

This sequence belongs to the SWC4 family. In terms of assembly, component of the SWR1 chromatin-remodeling complex and of the NuA4 histone acetyltransferase complex.

The protein resides in the nucleus. Its function is as follows. Component of the SWR1 complex which mediates the ATP-dependent exchange of histone H2A for the H2A variant H2A.Z leading to transcriptional regulation of selected genes by chromatin remodeling. Component of the NuA4 histone acetyltransferase complex which is involved in transcriptional activation of selected genes principally by acetylation of nucleosomal histone H4 and H2A. The NuA4 complex is also involved in DNA repair. The sequence is that of SWR1-complex protein 4 (crc-1) from Neurospora crassa (strain ATCC 24698 / 74-OR23-1A / CBS 708.71 / DSM 1257 / FGSC 987).